The chain runs to 205 residues: Thymidylate kinase (205 aa).

ATP is bound at residue 7–14; sequence GIDGSGKT.

Belongs to the thymidylate kinase family.

The catalysed reaction is dTMP + ATP = dTDP + ADP. In terms of biological role, phosphorylation of dTMP to form dTDP in both de novo and salvage pathways of dTTP synthesis. The sequence is that of Thymidylate kinase from Wolbachia pipientis subsp. Culex pipiens (strain wPip).